Reading from the N-terminus, the 124-residue chain is Quinol oxidase subunit 4 (124 aa).

A run of 3 helical transmembrane segments spans residues 16-36 (IVGF…AVYT), 44-64 (LWII…MFMH), and 78-98 (TLFG…IFAA).

Belongs to the cytochrome c oxidase bacterial subunit 4 family.

It is found in the cell membrane. The catalysed reaction is 2 a quinol + O2 = 2 a quinone + 2 H2O. Its function is as follows. Catalyzes quinol oxidation with the concomitant reduction of oxygen to water. Major component for energy conversion during vegetative growth. The sequence is that of Quinol oxidase subunit 4 (qoxD) from Bacillus subtilis (strain 168).